The chain runs to 137 residues: Nucleoside diphosphate kinase (137 aa).

Residues Lys-9, Phe-57, Arg-85, Thr-91, Arg-102, and Asn-112 each coordinate ATP. His-115 serves as the catalytic Pros-phosphohistidine intermediate.

This sequence belongs to the NDK family. In terms of assembly, homotetramer. Mg(2+) is required as a cofactor.

The protein resides in the cytoplasm. It carries out the reaction a 2'-deoxyribonucleoside 5'-diphosphate + ATP = a 2'-deoxyribonucleoside 5'-triphosphate + ADP. It catalyses the reaction a ribonucleoside 5'-diphosphate + ATP = a ribonucleoside 5'-triphosphate + ADP. Functionally, major role in the synthesis of nucleoside triphosphates other than ATP. The ATP gamma phosphate is transferred to the NDP beta phosphate via a ping-pong mechanism, using a phosphorylated active-site intermediate. The chain is Nucleoside diphosphate kinase from Leptospira biflexa serovar Patoc (strain Patoc 1 / ATCC 23582 / Paris).